The chain runs to 341 residues: Biotin synthase (341 aa).

The region spanning 56–285 is the Radical SAM core domain; sequence ADIQRAALLS…KARVRLSAGR (230 aa). Residues cysteine 71, cysteine 75, and cysteine 78 each coordinate [4Fe-4S] cluster. Positions 116, 148, 208, and 280 each coordinate [2Fe-2S] cluster.

Belongs to the radical SAM superfamily. Biotin synthase family. In terms of assembly, homodimer. It depends on [4Fe-4S] cluster as a cofactor. The cofactor is [2Fe-2S] cluster.

The catalysed reaction is (4R,5S)-dethiobiotin + (sulfur carrier)-SH + 2 reduced [2Fe-2S]-[ferredoxin] + 2 S-adenosyl-L-methionine = (sulfur carrier)-H + biotin + 2 5'-deoxyadenosine + 2 L-methionine + 2 oxidized [2Fe-2S]-[ferredoxin]. It participates in cofactor biosynthesis; biotin biosynthesis; biotin from 7,8-diaminononanoate: step 2/2. Functionally, catalyzes the conversion of dethiobiotin (DTB) to biotin by the insertion of a sulfur atom into dethiobiotin via a radical-based mechanism. This chain is Biotin synthase, found in Methylorubrum populi (strain ATCC BAA-705 / NCIMB 13946 / BJ001) (Methylobacterium populi).